Reading from the N-terminus, the 278-residue chain is Lipoyl-[GcvH]:protein N-lipoyltransferase (278 aa).

A BPL/LPL catalytic domain is found at 44–250; the sequence is RMAPSTVRGW…SLRHYAGDLV (207 aa). C149 serves as the catalytic Acyl-thioester intermediate.

This sequence belongs to the octanoyltransferase LipL family.

It catalyses the reaction N(6)-[(R)-lipoyl]-L-lysyl-[glycine-cleavage complex H protein] + L-lysyl-[lipoyl-carrier protein] = L-lysyl-[glycine-cleavage complex H protein] + N(6)-[(R)-lipoyl]-L-lysyl-[lipoyl-carrier protein]. It functions in the pathway protein modification; protein lipoylation via exogenous pathway. Catalyzes the amidotransfer (transamidation) of the lipoyl moiety from lipoyl-GcvH to the lipoyl domain of the E2 subunit of lipoate-dependent enzymes. Takes part in a pathway for scavenging of lipoic acid derived from eukaryotic host cells. Cannot use lipoyl-tripeptide (DK(L)A), lipoamide (LD), or free lipoate as substrate. The chain is Lipoyl-[GcvH]:protein N-lipoyltransferase from Listeria monocytogenes serovar 1/2a (strain ATCC BAA-679 / EGD-e).